We begin with the raw amino-acid sequence, 158 residues long: Transcription elongation factor GreA (158 aa).

This sequence belongs to the GreA/GreB family.

Functionally, necessary for efficient RNA polymerase transcription elongation past template-encoded arresting sites. The arresting sites in DNA have the property of trapping a certain fraction of elongating RNA polymerases that pass through, resulting in locked ternary complexes. Cleavage of the nascent transcript by cleavage factors such as GreA or GreB allows the resumption of elongation from the new 3'terminus. GreA releases sequences of 2 to 3 nucleotides. In Ralstonia nicotianae (strain ATCC BAA-1114 / GMI1000) (Ralstonia solanacearum), this protein is Transcription elongation factor GreA.